Reading from the N-terminus, the 115-residue chain is Non-specific lipid-transfer protein 3 (115 aa).

An N-terminal signal peptide occupies residues 1–23 (MAFALRFFTCLVLTVCIVASVDA). Cystine bridges form between Cys-27-Cys-74, Cys-37-Cys-51, Cys-52-Cys-97, and Cys-72-Cys-111.

This sequence belongs to the plant LTP family.

Plant non-specific lipid-transfer proteins transfer phospholipids as well as galactolipids across membranes. May play a role in wax or cutin deposition in the cell walls of expanding epidermal cells and certain secretory tissues. The protein is Non-specific lipid-transfer protein 3 (LTP3) of Arabidopsis thaliana (Mouse-ear cress).